A 172-amino-acid polypeptide reads, in one-letter code: Transcription factor E (172 aa).

One can recognise an HTH TFE/IIEalpha-type domain in the interval 8–90 (DDPVVQKYLH…LWTFQYENVP (83 aa)).

The protein belongs to the TFE family. In terms of assembly, monomer. Interaction with RNA polymerase subunits RpoF and RpoE is necessary for Tfe stimulatory transcription activity. Able to interact with Tbp and RNA polymerase in the absence of DNA promoter. Interacts both with the preinitiation and elongation complexes.

Functionally, transcription factor that plays a role in the activation of archaeal genes transcribed by RNA polymerase. Facilitates transcription initiation by enhancing TATA-box recognition by TATA-box-binding protein (Tbp), and transcription factor B (Tfb) and RNA polymerase recruitment. Not absolutely required for transcription in vitro, but particularly important in cases where Tbp or Tfb function is not optimal. It dynamically alters the nucleic acid-binding properties of RNA polymerases by stabilizing the initiation complex and destabilizing elongation complexes. Seems to translocate with the RNA polymerase following initiation and acts by binding to the non template strand of the transcription bubble in elongation complexes. This chain is Transcription factor E, found in Halobacterium salinarum (strain ATCC 700922 / JCM 11081 / NRC-1) (Halobacterium halobium).